Consider the following 134-residue polypeptide: D-ribose pyranase (134 aa).

Residue His-20 is the Proton donor of the active site. Substrate-binding positions include Asp-28, His-99, and 123–125 (FSN).

The protein belongs to the RbsD / FucU family. RbsD subfamily. Homodecamer.

The protein resides in the cytoplasm. The enzyme catalyses beta-D-ribopyranose = beta-D-ribofuranose. It functions in the pathway carbohydrate metabolism; D-ribose degradation; D-ribose 5-phosphate from beta-D-ribopyranose: step 1/2. Functionally, catalyzes the interconversion of beta-pyran and beta-furan forms of D-ribose. The polypeptide is D-ribose pyranase (Staphylococcus carnosus (strain TM300)).